The following is a 202-amino-acid chain: Ras-related protein ORAB-1 (202 aa).

GTP is bound by residues 15–23 (GDSGVGKSC), 33–40 (YTESYIST), 63–67 (DTAGQ), 121–124 (NKCD), and 151–153 (SAK). The Effector region motif lies at 37 to 45 (YISTIGVDF). The tract at residues 173–202 (MGPGATSGGSEKSNVNIQSTPVKSSGGGCC) is disordered. Positions 180 to 195 (GGSEKSNVNIQSTPVK) are enriched in polar residues. Residues Cys201 and Cys202 are each lipidated (S-geranylgeranyl cysteine).

This sequence belongs to the small GTPase superfamily. Rab family.

It localises to the cell membrane. Functionally, protein transport. Probably involved in vesicular traffic. In Diplobatis ommata (Ocellated electric ray), this protein is Ras-related protein ORAB-1.